Reading from the N-terminus, the 604-residue chain is Ectonucleoside triphosphate diphosphohydrolase 7 (604 aa).

Over 1–28 the chain is Cytoplasmic; it reads MARISFSYLCPASWYFTVPTVSPFLRQR. The chain crosses the membrane as a helical span at residues 29-49; the sequence is VAFLGLFFISCLLLLMLIIDF. Topologically, residues 50-546 are vesicular; it reads RHWSASLPRD…QAHGSWFRLS (497 aa). Glutamate 217 serves as the catalytic Proton acceptor. N-linked (GlcNAc...) asparagine glycosylation is present at asparagine 330. The cysteines at positions 448 and 477 are disulfide-linked. A helical membrane pass occupies residues 547 to 567; it reads FVYNHYLFFACILVVLLAIFL. The Cytoplasmic segment spans residues 568–604; that stretch reads YLLRLRRIHHRQTRASAPLDLLWLEEVVPMMGVQVGP.

Belongs to the GDA1/CD39 NTPase family. It depends on Ca(2+) as a cofactor. The cofactor is Mg(2+).

It localises to the cytoplasmic vesicle membrane. The enzyme catalyses a ribonucleoside 5'-triphosphate + H2O = a ribonucleoside 5'-diphosphate + phosphate + H(+). The catalysed reaction is UTP + H2O = UDP + phosphate + H(+). It catalyses the reaction GTP + H2O = GDP + phosphate + H(+). It carries out the reaction CTP + H2O = CDP + phosphate + H(+). Functionally, catalyzes the hydrolysis of nucleoside triphosphates and diphosphates in a calcium- or magnesium-dependent manner. Preferentially hydrolyzes nucleoside 5'-triphosphates, with substrate preference for UTP &gt; GTP &gt; CTP. Hydrolyzes ATP and nucleoside diphosphates only to a minor extent. This is Ectonucleoside triphosphate diphosphohydrolase 7 (ENTPD7) from Homo sapiens (Human).